The primary structure comprises 140 residues: Proline-rich nuclear receptor coactivator 2 (140 aa).

Residues 1–81 (MGGGERYNIP…NSNWNAGLSS (81 aa)) form a disordered region. 2 stretches are compositionally biased toward polar residues: residues 11 to 38 (DPQS…SQTK) and 59 to 81 (AMQN…GLSS). An SH3-binding motif is present at residues 100–106 (SEPPSPS).

This sequence belongs to the PNRC family. PNRC2 subfamily. Interacts with UPF1/RENT1; preferentially interacts with hyperphosphorylated form. Interacts with DCP1A. Interacts with many nuclear receptors including ESR1, ESRRA, ESRRG, NR3C1/GR, NR5A1, PGR, TR, RAR and RXR. Strong expression is detected in lung, spleen, ovary, thymus, and colon.

It localises to the nucleus. It is found in the cytoplasm. The protein localises to the P-body. Its function is as follows. Involved in nonsense-mediated mRNA decay (NMD) by acting as a bridge between the mRNA decapping complex and the NMD machinery. May act by targeting the NMD machinery to the P-body and recruiting the decapping machinery to aberrant mRNAs. Required for UPF1/RENT1 localization to the P-body. Plays a role in glucocorticoid receptor-mediated mRNA degradation by interacting with the glucocorticoid receptor NR3C1 in a ligand-dependent manner when it is bound to the 5' UTR of target mRNAs and recruiting the RNA helicase UPF1 and the mRNA-decapping enzyme DCP1A, leading to RNA decay. Also acts as a nuclear receptor coactivator. May play a role in controlling the energy balance between energy storage and energy expenditure. The polypeptide is Proline-rich nuclear receptor coactivator 2 (Pnrc2) (Mus musculus (Mouse)).